The following is a 242-amino-acid chain: Galectin-3 (242 aa).

Residues 1-35 form a disordered region; sequence MADGFSLNDALSGSGHPPNQGWPGPWGNQPAGPGG. At Ala2 the chain carries N-acetylalanine. Residue Ser6 is modified to Phosphoserine; by CK1. Position 12 is a phosphoserine (Ser12). Over residues 17–31 the composition is skewed to low complexity; sequence PPNQGWPGPWGNQPA. 4 tandem repeats follow at residues 35–43, 44–52, 53–61, and 62–70. The tract at residues 35–98 is 7 X 9 AA tandem repeats of Y-P-G-X(3)-P-[GS]-A; that stretch reads GYPGAAYPGA…GAGAYPGASP (64 aa). Residues 55 to 93 form a disordered region; the sequence is GQAPPGPYPGPGAHGAYPGQPGGPGAYPSPGQPSGAGAY. One copy of the 5; approximate repeat lies at 71–80; that stretch reads YPGQPGGPGA. Low complexity predominate over residues 80-93; sequence AYPSPGQPSGAGAY. The stretch at 81–92 is one 6; approximate repeat; sequence YPSPGQPSGAGA. One copy of the 7; truncated repeat lies at 93-98; the sequence is YPGASP. Residues 110–240 enclose the Galectin domain; the sequence is YDLPLPGGVM…DIQLTSASHA (131 aa). Residue 173-181 participates in a beta-D-galactoside binding; sequence WGREERQTT. The Nuclear export signal signature appears at 218–233; it reads RNLKEINKLGISGDIQ.

Probably forms homo- or heterodimers. Interacts with DMBT1. Interacts with CD6 and ALCAM. Forms a complex with the ITGA3, ITGB1 and CSPG4. Interacts with LGALS3BP, LYPD3, ZFTRAF1 and UACA. Interacts with TRIM16; this interaction mediates autophagy of damage endomembranes. Interacts with cargo receptor TMED10; the interaction mediates the translocation from the cytoplasm into the ERGIC (endoplasmic reticulum-Golgi intermediate compartment) and thereby secretion. Interacts with and inhibits by binding NCR3/NKp30.

It is found in the cytoplasm. It localises to the nucleus. Its subcellular location is the secreted. Functionally, galactose-specific lectin which binds IgE. May mediate with the alpha-3, beta-1 integrin the stimulation by CSPG4 of endothelial cells migration. Together with DMBT1, required for terminal differentiation of columnar epithelial cells during early embryogenesis. In the nucleus: acts as a pre-mRNA splicing factor. Involved in acute inflammatory responses including neutrophil activation and adhesion, chemoattraction of monocytes macrophages, opsonization of apoptotic neutrophils, and activation of mast cells. Together with TRIM16, coordinates the recognition of membrane damage with mobilization of the core autophagy regulators ATG16L1 and BECN1 in response to damaged endomembranes. When secreted, interacts with NK cell-activating receptor NCR3/NKp30 acting as an inhibitory ligand which antagonizes NK cell attack. The sequence is that of Galectin-3 (LGALS3) from Oryctolagus cuniculus (Rabbit).